A 295-amino-acid polypeptide reads, in one-letter code: Acetylglutamate kinase (295 aa).

Substrate-binding positions include 66 to 67, arginine 88, and asparagine 193; that span reads GG.

It belongs to the acetylglutamate kinase family. ArgB subfamily.

The protein resides in the cytoplasm. The catalysed reaction is N-acetyl-L-glutamate + ATP = N-acetyl-L-glutamyl 5-phosphate + ADP. The protein operates within amino-acid biosynthesis; L-arginine biosynthesis; N(2)-acetyl-L-ornithine from L-glutamate: step 2/4. In terms of biological role, catalyzes the ATP-dependent phosphorylation of N-acetyl-L-glutamate. In Rhizobium etli (strain CIAT 652), this protein is Acetylglutamate kinase.